Here is a 222-residue protein sequence, read N- to C-terminus: Eukaryotic translation initiation factor 3 subunit K (222 aa).

Residues 46–208 (YDLEANLAVL…KIKTKNITEK (163 aa)) enclose the PCI domain.

This sequence belongs to the eIF-3 subunit K family. In terms of assembly, component of the eukaryotic translation initiation factor 3 (eIF-3) complex. The eIF-3 complex interacts with pix.

It is found in the cytoplasm. Functionally, component of the eukaryotic translation initiation factor 3 (eIF-3) complex, which is involved in protein synthesis of a specialized repertoire of mRNAs and, together with other initiation factors, stimulates binding of mRNA and methionyl-tRNAi to the 40S ribosome. The eIF-3 complex specifically targets and initiates translation of a subset of mRNAs involved in cell proliferation. The polypeptide is Eukaryotic translation initiation factor 3 subunit K (Drosophila ananassae (Fruit fly)).